Consider the following 146-residue polypeptide: Hemoglobin subunit beta (146 aa).

Residues 2–146 (QWSESERTII…VVSALGKQYH (145 aa)) form the Globin domain. Heme b contacts are provided by His-63 and His-92.

It belongs to the globin family. In terms of assembly, heterotetramer of two alpha chains and two beta chains. As to expression, red blood cells.

Its function is as follows. Involved in oxygen transport from gills to the various peripheral tissues. This chain is Hemoglobin subunit beta (hbb), found in Pogonophryne scotti (Saddleback plunderfish).